Here is a 73-residue protein sequence, read N- to C-terminus: Translation initiation factor IF-1 (73 aa).

The 73-residue stretch at 1–73 (MPKKDGVIEI…SRGRIVYRYK (73 aa)) folds into the S1-like domain.

This sequence belongs to the IF-1 family. In terms of assembly, component of the 30S ribosomal translation pre-initiation complex which assembles on the 30S ribosome in the order IF-2 and IF-3, IF-1 and N-formylmethionyl-tRNA(fMet); mRNA recruitment can occur at any time during PIC assembly.

The protein localises to the cytoplasm. In terms of biological role, one of the essential components for the initiation of protein synthesis. Stabilizes the binding of IF-2 and IF-3 on the 30S subunit to which N-formylmethionyl-tRNA(fMet) subsequently binds. Helps modulate mRNA selection, yielding the 30S pre-initiation complex (PIC). Upon addition of the 50S ribosomal subunit IF-1, IF-2 and IF-3 are released leaving the mature 70S translation initiation complex. The chain is Translation initiation factor IF-1 from Kineococcus radiotolerans (strain ATCC BAA-149 / DSM 14245 / SRS30216).